The primary structure comprises 348 residues: VIP36-like protein (348 aa).

Positions 1–38 (MAATLGPLGSWQQWRRCLLARDGSRMLLLLLLLGSGQG) are cleaved as a signal peptide. Residues 39–313 (PQQVGAGQTF…APLPPLSGLA (275 aa)) lie on the Lumenal side of the membrane. The region spanning 49–274 (EYLKREHSLS…DVISLKLFEL (226 aa)) is the L-type lectin-like domain. A carbohydrate-binding residues include Ser-93 and Asp-128. Ca(2+)-binding residues include Asp-159, Tyr-161, and Asn-163. 161–163 (YPN) is a binding site for a carbohydrate. A glycan (N-linked (GlcNAc...) asparagine) is linked at Asn-181. A carbohydrate is bound at residue His-188. Asp-191 is a binding site for Ca(2+). Cys-200 and Cys-237 are disulfide-bonded. 258 to 260 (GDL) is an a carbohydrate binding site. A helical transmembrane segment spans residues 314–334 (LFHIVFFSLVIFVFAIVIGII). The Cytoplasmic portion of the chain corresponds to 335-348 (LYNKWQEQSRKRFY). The short motif at 344 to 346 (RKR) is the Endoplasmic reticulum retention signal element.

The protein resides in the endoplasmic reticulum membrane. It localises to the golgi apparatus membrane. May be involved in the regulation of export from the endoplasmic reticulum of a subset of glycoproteins. May function as a regulator of ERGIC-53. The sequence is that of VIP36-like protein (LMAN2L) from Pongo abelii (Sumatran orangutan).